A 254-amino-acid chain; its full sequence is Receptor expression-enhancing protein 3 (254 aa).

3 helical membrane passes run 1–21 (MVSWMISRAVVLVFGMLYPAY), 35–55 (YVRWMMYWIVFALYTVIETVA), and 59–79 (LAWFPLYYELKIAFVIWLLSP). Positions 162–232 (DEPVGHRPYQ…QSMKSVKTIK (71 aa)) are disordered. Positions 198–212 (EQTDEEAEGPFSDDE) are enriched in acidic residues. Threonine 200 is modified (phosphothreonine). Serine 209 is modified (phosphoserine).

The protein belongs to the DP1 family.

It localises to the endoplasmic reticulum membrane. Functionally, microtubule-binding protein required to ensure proper cell division and nuclear envelope reassembly by sequestering the endoplasmic reticulum away from chromosomes during mitosis. Probably acts by clearing the endoplasmic reticulum membrane from metaphase chromosomes. The chain is Receptor expression-enhancing protein 3 (Reep3) from Mus musculus (Mouse).